A 534-amino-acid chain; its full sequence is Anther-specific proline-rich protein APG (534 aa).

Positions 1–35 are cleaved as a signal peptide; that stretch reads MKRSSLVDSCSYSRIFRSIFCLLSFCIFFLTTTNA. The segment covering 59-196 has biased composition (pro residues); the sequence is NPPTPDPSPK…SPKPAPSPPK (138 aa). The tract at residues 59–202 is disordered; the sequence is NPPTPDPSPK…SPPKPENKTI (144 aa). The active-site Nucleophile is S211. Catalysis depends on residues D508 and H511.

It belongs to the 'GDSL' lipolytic enzyme family. As to expression, found in sporophytic and gametophytic cell types in the anther, only in male fertile plants.

This chain is Anther-specific proline-rich protein APG (APG), found in Arabidopsis thaliana (Mouse-ear cress).